We begin with the raw amino-acid sequence, 182 residues long: UPF0301 protein NMC1274 (182 aa).

It belongs to the UPF0301 (AlgH) family.

The protein is UPF0301 protein NMC1274 of Neisseria meningitidis serogroup C / serotype 2a (strain ATCC 700532 / DSM 15464 / FAM18).